Consider the following 211-residue polypeptide: SOSS complex subunit B2 (211 aa).

Residues 27–97 (IVLEIGRVTK…TLYTGRGGDL (71 aa)) constitute a DNA-binding region (OB). The interval 125–211 (NQQNKTSKEQ…GRDPRRASKR (87 aa)) is disordered. Polar residues predominate over residues 136-157 (GNSPPNQNAGNGTVPVFSNNNA). Residues 179–195 (NGPPPVTAGGTPAPPKP) show a composition bias toward pro residues.

This sequence belongs to the SOSS-B family. SOSS-B2 subfamily. In terms of assembly, component of the SOSS complex, composed of soss-b (soss-b1/nabp2 or soss-b2/nabp1), soss-a/ints3 and soss-c/inip. SOSS complexes containing soss-b1/nabp2 are more abundant than complexes containing soss-b2/nabp1.

The protein localises to the nucleus. Component of the SOSS complex, a multiprotein complex that functions downstream of the MRN complex to promote DNA repair and G2/M checkpoint. In the SOSS complex, acts as a sensor of single-stranded DNA that binds to single-stranded DNA. The SOSS complex associates with DNA lesions and influences diverse endpoints in the cellular DNA damage response including cell-cycle checkpoint activation, recombinational repair and maintenance of genomic stability. Required for efficient homologous recombination-dependent repair of double-strand breaks (DSBs). The sequence is that of SOSS complex subunit B2 (nabp1) from Danio rerio (Zebrafish).